A 706-amino-acid polypeptide reads, in one-letter code: B-cell lymphoma 6 protein (706 aa).

In terms of domain architecture, BTB spans 32–99 (TDVVIVVSRE…MYTSRLNLRE (68 aa)). The disordered stretch occupies residues 317–349 (EPPNAPLNRKGLVSPQSPQKSDCQPNSPTESCS). Residues 330–349 (SPQSPQKSDCQPNSPTESCS) show a composition bias toward polar residues. Ser333 and Ser343 each carry phosphoserine; by MAPK1. Residue Ser361 is modified to Phosphoserine. The tract at residues 376–379 (KKYK) is required for interaction with NuRD complex and for transcriptional repressor activity. At Lys379 the chain carries N6-acetyllysine. Ser404 bears the Phosphoserine mark. The disordered stretch occupies residues 407-467 (AYTAPPACQP…PRSSSESHSP (61 aa)). The span at 424–456 (DLQSPTKLSASGEDSTIPQASRLNNIVNRSMTG) shows a compositional bias: polar residues. Low complexity predominate over residues 457 to 466 (SPRSSSESHS). 6 C2H2-type zinc fingers span residues 518–541 (FFCN…LQTH), 546–568 (YKCD…KTVH), 574–596 (YRCN…TRIH), 602–624 (YKCE…VLIH), 630–652 (YPCE…LRIH), and 658–681 (YHCE…RQKH).

In terms of assembly, homodimer. Interacts (via BTB domain) with the corepressors BCOR, NCOR1 and SMRT/NCOR2; the interactions are direct. Forms preferably ternary complexes with BCOR and SMRT/NCOR2 on target gene promoters but, on enhancer elements, interacts with SMRT/NCOR2 and HDAC3 to repress proximal gene expression. Interacts with histone deacetylases HDAC2, HDAC5 and HDAC9 (via the catalytic domain). Interacts with ZBTB7 and BCL6B. Interacts with SCF(FBXO11) complex; the interaction is independent of phosphorylation and promotes ubiquitination. Interacts (when phosphorylated) with PIN1; the interaction is required for BCL6 degradation upon genotoxic stress. Interacts with ZBTB17; inhibits ZBTB17 transcriptional activity. Interacts with CTBP1, autoinhibits its transcriptional expression. Interacts with NOTCH1 NCID and SIRT1; leads to a epigenetic repression of selective NOTCH1-target genes. Interacts (nor via BTB domain neither acetylated) with the NuRD complex components CHD4, HDAC1, MBD3 and MTA3; the interaction with MTA3 inhibits BCL6 acetylation and is required for BCL6 transpriptional repression. Post-translationally, phosphorylated by MAPK1 in response to antigen receptor activation at Ser-333 and Ser-343. Phosphorylated by ATM in response to genotoxic stress. Phosphorylation induces its degradation by ubiquitin/proteasome pathway. In terms of processing, polyubiquitinated. Polyubiquitinated by SCF(FBXO11), leading to its degradation by the proteasome. Ubiquitinated by the SCF(FBXL17) complex, leading to its degradation by the proteasome: ubiquitination by the SCF(FBXL17) complex takes place when aberrant BTB domain dimers are formed. Acetylated at Lys-379 by EP300 which inhibits the interaction with NuRD complex and the transcriptional repressor function. Deacetylated by HDAC- and SIR2-dependent pathways. In terms of tissue distribution, expressed in germinal center T- and B-cells and in primary immature dendritic cells.

It is found in the nucleus. Functionally, transcriptional repressor mainly required for germinal center (GC) formation and antibody affinity maturation which has different mechanisms of action specific to the lineage and biological functions. Forms complexes with different corepressors and histone deacetylases to repress the transcriptional expression of different subsets of target genes. Represses its target genes by binding directly to the DNA sequence 5'-TTCCTAGAA-3' (BCL6-binding site) or indirectly by repressing the transcriptional activity of transcription factors. In GC B-cells, represses genes that function in differentiation, inflammation, apoptosis and cell cycle control, also autoregulates its transcriptional expression and up-regulates, indirectly, the expression of some genes important for GC reactions, such as AICDA, through the repression of microRNAs expression, like miR155. An important function is to allow GC B-cells to proliferate very rapidly in response to T-cell dependent antigens and tolerate the physiological DNA breaks required for immunglobulin class switch recombination and somatic hypermutation without inducing a p53/TP53-dependent apoptotic response. In follicular helper CD4(+) T-cells (T(FH) cells), promotes the expression of T(FH)-related genes but inhibits the differentiation of T(H)1, T(H)2 and T(H)17 cells. Also required for the establishment and maintenance of immunological memory for both T- and B-cells. Suppresses macrophage proliferation through competition with STAT5 for STAT-binding motifs binding on certain target genes, such as CCL2 and CCND2. In response to genotoxic stress, controls cell cycle arrest in GC B-cells in both p53/TP53-dependedent and -independent manners. Besides, also controls neurogenesis through the alteration of the composition of NOTCH-dependent transcriptional complexes at selective NOTCH targets, such as HES5, including the recruitment of the deacetylase SIRT1 and resulting in an epigenetic silencing leading to neuronal differentiation. This chain is B-cell lymphoma 6 protein (BCL6), found in Homo sapiens (Human).